The sequence spans 199 residues: Peroxiredoxin 2 (199 aa).

The Thioredoxin domain maps to 1–152; sequence MGQKAPDFTV…IIRVIKALQF (152 aa). Cysteine 40 functions as the Cysteine sulfenic acid (-SOH) intermediate in the catalytic mechanism. Arginine 115 is a binding site for substrate.

It belongs to the peroxiredoxin family. Prx6 subfamily. Homodecamer. Pentamer of dimers that assemble into a ring structure.

Its subcellular location is the cytoplasm. The enzyme catalyses a hydroperoxide + [thioredoxin]-dithiol = an alcohol + [thioredoxin]-disulfide + H2O. Its function is as follows. Thiol-specific peroxidase that catalyzes the reduction of hydrogen peroxide and organic hydroperoxides to water and alcohols, respectively. Plays a role in cell protection against oxidative stress by detoxifying peroxides. The protein is Peroxiredoxin 2 of Thermoplasma acidophilum (strain ATCC 25905 / DSM 1728 / JCM 9062 / NBRC 15155 / AMRC-C165).